Reading from the N-terminus, the 217-residue chain is MSDDQGDAVEASSEADEEASTSPDEGDDRDPVAAVAERAENDPASVAAELVALREEAAELETERDDLESRLKRKQAEFQNYKKRQEKQREKERARATEALVEKLLEVRDNLNRALEQDADADIREGVEATFRQLDDILDGEGVEAIEPDPGTETDPKRHEVLLQVESDEPEGTVAELHRPGYEMAGKVLRAAQVTVSEGPSGDSEAEDDADGEDGDE.

Acidic residues-rich tracts occupy residues 1–28 (MSDDQGDAVEASSEADEEASTSPDEGDD), 136–152 (DILDGEGVEAIEPDPGT), and 204–217 (SEAEDDADGEDGDE). 3 disordered regions span residues 1 to 44 (MSDD…NDPA), 135 to 157 (DDILDGEGVEAIEPDPGTETDPK), and 193 to 217 (QVTVSEGPSGDSEAEDDADGEDGDE).

It belongs to the GrpE family. Homodimer.

It is found in the cytoplasm. In terms of biological role, participates actively in the response to hyperosmotic and heat shock by preventing the aggregation of stress-denatured proteins, in association with DnaK and GrpE. It is the nucleotide exchange factor for DnaK and may function as a thermosensor. Unfolded proteins bind initially to DnaJ; upon interaction with the DnaJ-bound protein, DnaK hydrolyzes its bound ATP, resulting in the formation of a stable complex. GrpE releases ADP from DnaK; ATP binding to DnaK triggers the release of the substrate protein, thus completing the reaction cycle. Several rounds of ATP-dependent interactions between DnaJ, DnaK and GrpE are required for fully efficient folding. The sequence is that of Protein GrpE from Natronomonas pharaonis (strain ATCC 35678 / DSM 2160 / CIP 103997 / JCM 8858 / NBRC 14720 / NCIMB 2260 / Gabara) (Halobacterium pharaonis).